Reading from the N-terminus, the 452-residue chain is MSSSAIKIRNALLKATDPKLRSDNWQYILDVCDLVKEDPEDNGQEVMSLIEKRLEQQDANVILRTLSLTVSLAENCGSRLRQEISSKNFTSLLYALIESHSVHITLKKAVTDVVKQLSDSFKDDPSLRAMGDLYDKIKRKAPYLVQPNVPEKHNMSTQADNSDDEELQKALKMSLFEYEKQKKLQEQEKESAEVLPQQQQQHQQQNQAPAHKIPAQTVVRRVRALYDLTTNEPDELSFRKGDVITVLEQVYRDWWKGALRGNMGIFPLNYVTPIVEPSKEEIEKEKNKEAIVFSQKTTIDQLHNSLNAASKTGNSNEVLQDPHIGDMYGSVTPLRPQVTRMLGKYAKEKEDMLSLRQVLANAERSYNQLMDRAANAHISPPVPGPALYAGMTHANNTPVMPPQRQSYQSNEYSPYPSNLPIQHPTNSANNTPQYGYDLGYSVVSQPPPGYEQ.

Serine 2 bears the N-acetylserine mark. A VHS domain is found at 15–145 (ATDPKLRSDN…KIKRKAPYLV (131 aa)). Disordered stretches follow at residues 144 to 166 (LVQP…DDEE) and 187 to 212 (QEKE…PAHK). Serine 162 is subject to Phosphoserine. Positions 162-181 (SDDEELQKALKMSLFEYEKQ) constitute a UIM domain. Residues 197–207 (QQQQQHQQQNQ) show a composition bias toward low complexity. The 60-residue stretch at 217 to 276 (TVVRRVRALYDLTTNEPDELSFRKGDVITVLEQVYRDWWKGALRGNMGIFPLNYVTPIVE) folds into the SH3 domain. The disordered stretch occupies residues 389-452 (AGMTHANNTP…VSQPPPGYEQ (64 aa)). Positions 393–433 (HANNTPVMPPQRQSYQSNEYSPYPSNLPIQHPTNSANNTPQ) are enriched in polar residues.

The protein belongs to the STAM family. Component of the ESCRT-0 complex composed of HSE1 and VPS27. Interacts with the ESCRT-I subunit VPS23, the UBP7 deubiquitinase and the E3 ligase RSP5. May form a complex composed of VPS27, HSE1 and DOA1. Interacts (via SH3 domain) with DOA1.

Its subcellular location is the endosome membrane. Its function is as follows. Component of the ESCRT-0 complex which is the sorting receptor for ubiquitinated cargo proteins at the multivesicular body (MVB) and recruits ESCRT-I to the MVB outer membrane. The chain is Class E vacuolar protein-sorting machinery protein HSE1 (HSE1) from Saccharomyces cerevisiae (strain ATCC 204508 / S288c) (Baker's yeast).